The chain runs to 266 residues: Uracil-DNA glycosylase (266 aa).

The segment at 1 to 25 (MTRRADPAQATLFDDDEPAGAPTAT) is disordered. The Proton acceptor role is filled by Asp97.

This sequence belongs to the uracil-DNA glycosylase (UDG) superfamily. UNG family.

It is found in the cytoplasm. The enzyme catalyses Hydrolyzes single-stranded DNA or mismatched double-stranded DNA and polynucleotides, releasing free uracil.. Its function is as follows. Excises uracil residues from the DNA which can arise as a result of misincorporation of dUMP residues by DNA polymerase or due to deamination of cytosine. This is Uracil-DNA glycosylase from Ralstonia nicotianae (strain ATCC BAA-1114 / GMI1000) (Ralstonia solanacearum).